A 193-amino-acid chain; its full sequence is Thymidine kinase (193 aa).

ATP-binding positions include 15–22 (GCMYSGKT) and 87–90 (DELH). The active-site Proton acceptor is the Glu-88. 4 residues coordinate Zn(2+): Cys-147, Cys-150, Cys-185, and Cys-188.

This sequence belongs to the thymidine kinase family. In terms of assembly, homotetramer.

The protein resides in the cytoplasm. The catalysed reaction is thymidine + ATP = dTMP + ADP + H(+). This is Thymidine kinase from Chloroflexus aurantiacus (strain ATCC 29366 / DSM 635 / J-10-fl).